The sequence spans 334 residues: Malate dehydrogenase (334 aa).

16–22 is an NAD(+) binding site; sequence GAAGQIA. Residues Arg97 and Arg103 each contribute to the substrate site. NAD(+)-binding positions include Asn110, Gln117, and 134–136; that span reads VGN. Residues Asn136 and Arg167 each coordinate substrate. The Proton acceptor role is filled by His192.

This sequence belongs to the LDH/MDH superfamily. MDH type 2 family.

The enzyme catalyses (S)-malate + NAD(+) = oxaloacetate + NADH + H(+). Its function is as follows. Catalyzes the reversible oxidation of malate to oxaloacetate. The protein is Malate dehydrogenase of Nocardia farcinica (strain IFM 10152).